The chain runs to 431 residues: UDP-N-acetylmuramate--L-alanine ligase (431 aa).

108-114 (GSHGKTS) provides a ligand contact to ATP.

Belongs to the MurCDEF family.

It is found in the cytoplasm. It catalyses the reaction UDP-N-acetyl-alpha-D-muramate + L-alanine + ATP = UDP-N-acetyl-alpha-D-muramoyl-L-alanine + ADP + phosphate + H(+). It participates in cell wall biogenesis; peptidoglycan biosynthesis. Its function is as follows. Cell wall formation. In Exiguobacterium sibiricum (strain DSM 17290 / CCUG 55495 / CIP 109462 / JCM 13490 / 255-15), this protein is UDP-N-acetylmuramate--L-alanine ligase.